Reading from the N-terminus, the 468-residue chain is Glutamate--tRNA ligase (468 aa).

Positions proline 12–threonine 22 match the 'HIGH' region motif. A 'KMSKS' region motif is present at residues lysine 238–arginine 242. Lysine 241 serves as a coordination point for ATP.

Belongs to the class-I aminoacyl-tRNA synthetase family. Glutamate--tRNA ligase type 1 subfamily. As to quaternary structure, monomer.

The protein localises to the cytoplasm. The catalysed reaction is tRNA(Glu) + L-glutamate + ATP = L-glutamyl-tRNA(Glu) + AMP + diphosphate. Its function is as follows. Catalyzes the attachment of glutamate to tRNA(Glu) in a two-step reaction: glutamate is first activated by ATP to form Glu-AMP and then transferred to the acceptor end of tRNA(Glu). The polypeptide is Glutamate--tRNA ligase (Phenylobacterium zucineum (strain HLK1)).